Consider the following 629-residue polypeptide: UvrABC system protein C (629 aa).

The region spanning 12-91 (DRPGCYLFKD…IKKHKPKYNI (80 aa)) is the GIY-YIG domain. In terms of domain architecture, UVR spans 200–235 (QEVLERLRARMEQAAERLEFERAAELRDQIRAIEKV).

It belongs to the UvrC family. As to quaternary structure, interacts with UvrB in an incision complex.

Its subcellular location is the cytoplasm. Functionally, the UvrABC repair system catalyzes the recognition and processing of DNA lesions. UvrC both incises the 5' and 3' sides of the lesion. The N-terminal half is responsible for the 3' incision and the C-terminal half is responsible for the 5' incision. This is UvrABC system protein C from Symbiobacterium thermophilum (strain DSM 24528 / JCM 14929 / IAM 14863 / T).